A 786-amino-acid polypeptide reads, in one-letter code: Protein RDM16 (786 aa).

3 stretches are compositionally biased toward basic and acidic residues: residues Met-1 to Arg-80, Arg-87 to Asp-112, and Asn-123 to Gln-143. Disordered stretches follow at residues Met-1 to Leu-223, Lys-255 to Thr-283, Arg-532 to Lys-557, and Glu-616 to Lys-642. Polar residues predominate over residues Ser-145–Tyr-164. Residues Ser-165 to Ser-176 show a composition bias toward low complexity. Over residues Gln-177 to Thr-189 the composition is skewed to polar residues. The segment covering Asp-190–Pro-203 has biased composition (basic and acidic residues). Residues Thr-268 to Thr-283 show a composition bias toward low complexity. A compositionally biased stretch (pro residues) spans Ile-534–Pro-547.

It localises to the nucleus. The protein resides in the nucleoplasm. Functions in the RNA-directed DNA methylation (RdDM) pathway. Acts as a pre-mRNA splicing factor, likely by affecting Pol V transcripts. Affects DNA methylation of transposable elements (TEs) and preferentially influences NRPD1- and ROS1-targeted loci. The protein is Protein RDM16 of Arabidopsis thaliana (Mouse-ear cress).